A 130-amino-acid polypeptide reads, in one-letter code: uncharacterized protein (130 aa).

Residues 21-43 traverse the membrane as a helical segment; that stretch reads VAVCTVAAEVLAIFTLVCTRVFI.

The protein resides in the membrane. This is an uncharacterized protein from Saccharomyces cerevisiae (strain ATCC 204508 / S288c) (Baker's yeast).